Here is a 640-residue protein sequence, read N- to C-terminus: 1,4-alpha-glucan branching enzyme GlgB (640 aa).

Residue D318 is the Nucleophile of the active site. E371 functions as the Proton donor in the catalytic mechanism.

It belongs to the glycosyl hydrolase 13 family. GlgB subfamily. In terms of assembly, monomer.

The catalysed reaction is Transfers a segment of a (1-&gt;4)-alpha-D-glucan chain to a primary hydroxy group in a similar glucan chain.. Its pathway is glycan biosynthesis; glycogen biosynthesis. Its function is as follows. Catalyzes the formation of the alpha-1,6-glucosidic linkages in glycogen by scission of a 1,4-alpha-linked oligosaccharide from growing alpha-1,4-glucan chains and the subsequent attachment of the oligosaccharide to the alpha-1,6 position. The sequence is that of 1,4-alpha-glucan branching enzyme GlgB from Francisella tularensis subsp. tularensis (strain FSC 198).